The primary structure comprises 383 residues: Ribosomal RNA large subunit methyltransferase G (383 aa).

Belongs to the methyltransferase superfamily. RlmG family.

It is found in the cytoplasm. The enzyme catalyses guanosine(1835) in 23S rRNA + S-adenosyl-L-methionine = N(2)-methylguanosine(1835) in 23S rRNA + S-adenosyl-L-homocysteine + H(+). Specifically methylates the guanine in position 1835 (m2G1835) of 23S rRNA. The protein is Ribosomal RNA large subunit methyltransferase G of Shewanella denitrificans (strain OS217 / ATCC BAA-1090 / DSM 15013).